The following is a 149-amino-acid chain: Large ribosomal subunit protein bL9 (149 aa).

It belongs to the bacterial ribosomal protein bL9 family.

Functionally, binds to the 23S rRNA. The polypeptide is Large ribosomal subunit protein bL9 (Helicobacter pylori (strain J99 / ATCC 700824) (Campylobacter pylori J99)).